A 360-amino-acid polypeptide reads, in one-letter code: Alpha-2-macroglobulin receptor-associated protein (360 aa).

The first 33 residues, 1-33 (MAPLRDRVSTLPRLQLLVLLLLPLLLVPQPIAG), serve as a signal peptide directing secretion. Residues S53 and S138 each carry the phosphoserine modification. Positions 222–302 (SKHSELKDRL…KHNHYQKQLE (81 aa)) form a coiled coil. The tract at residues 240–356 (RLRKVSHQGY…DLSSRVSRAR (117 aa)) is LDL receptor binding. N271 carries N-linked (GlcNAc...) asparagine glycosylation. The Prevents secretion from ER motif lies at 357-360 (HNEL).

The protein belongs to the alpha-2-MRAP family. Interacts with the LRP1/alpha-2-macroglobulin receptor heavy and light chains; the interaction is transient and coincides with a reduction of ligand binding by the receptor. Interacts with LRP2/glycoprotein 330. Interacts with LRP1B; binding is followed by internalization and degradation. Interacts with LDLR. Interacts with SORL1. Interacts with LRP1; this interaction is followed by rapid internalization. Post-translationally, N-glycosylated.

The protein localises to the rough endoplasmic reticulum lumen. The protein resides in the endoplasmic reticulum-Golgi intermediate compartment lumen. It is found in the golgi apparatus. Its subcellular location is the cis-Golgi network. It localises to the golgi apparatus lumen. The protein localises to the endosome lumen. The protein resides in the cell surface. Functionally, molecular chaperone for LDL receptor-related proteins that may regulate their ligand binding activity along the secretory pathway. This is Alpha-2-macroglobulin receptor-associated protein (Lrpap1) from Rattus norvegicus (Rat).